Consider the following 430-residue polypeptide: ATP-dependent RNA helicase RhlB (430 aa).

The Q motif signature appears at 9 to 37 (QKFSDFALHPQVIEALETKGFHNCTPIQA). The Helicase ATP-binding domain occupies 40–219 (LPFTLSGRDV…FENMNNAEYV (180 aa)). ATP is bound at residue 53 to 60 (AQTGTGKT). The short motif at 165 to 168 (DEAD) is the DEAD box element. The 146-residue stretch at 245-390 (RLLQTLIEEE…VSRYNSDALM (146 aa)) folds into the Helicase C-terminal domain. Residues 388 to 430 (ALMTDLPPPKRLTRNRSGNGPRRGGNNNRRSSASRSPNRKRSG) are disordered. The segment covering 402 to 423 (NRSGNGPRRGGNNNRRSSASRS) has biased composition (low complexity).

The protein belongs to the DEAD box helicase family. RhlB subfamily. As to quaternary structure, component of the RNA degradosome, which is a multiprotein complex involved in RNA processing and mRNA degradation.

The protein localises to the cytoplasm. It catalyses the reaction ATP + H2O = ADP + phosphate + H(+). Its function is as follows. DEAD-box RNA helicase involved in RNA degradation. Has RNA-dependent ATPase activity and unwinds double-stranded RNA. The chain is ATP-dependent RNA helicase RhlB from Erwinia tasmaniensis (strain DSM 17950 / CFBP 7177 / CIP 109463 / NCPPB 4357 / Et1/99).